Here is a 165-residue protein sequence, read N- to C-terminus: Endoribonuclease YbeY (165 aa).

3 residues coordinate Zn(2+): His-130, His-134, and His-140.

This sequence belongs to the endoribonuclease YbeY family. Requires Zn(2+) as cofactor.

It localises to the cytoplasm. Functionally, single strand-specific metallo-endoribonuclease involved in late-stage 70S ribosome quality control and in maturation of the 3' terminus of the 16S rRNA. The chain is Endoribonuclease YbeY from Streptococcus pneumoniae serotype 2 (strain D39 / NCTC 7466).